The sequence spans 150 residues: Large ribosomal subunit protein uL13 (150 aa).

The disordered stretch occupies residues 129 to 150 (AEHPHAAQQPKPLQLDPAATAQ).

Belongs to the universal ribosomal protein uL13 family. As to quaternary structure, part of the 50S ribosomal subunit.

This protein is one of the early assembly proteins of the 50S ribosomal subunit, although it is not seen to bind rRNA by itself. It is important during the early stages of 50S assembly. In Synechococcus sp. (strain WH7803), this protein is Large ribosomal subunit protein uL13.